A 215-amino-acid chain; its full sequence is Cytochrome b6 (215 aa).

The chain crosses the membrane as a helical span at residues 32-52 (IFYCIGGITFTCFIMQVASGF). Cysteine 35 serves as a coordination point for heme c. Positions 86 and 100 each coordinate heme b. A run of 3 helical transmembrane segments spans residues 90–110 (ASMMVLTMILHVFRVYLTGGF), 116–136 (LTWVTGVILAVCTVSFGVTGY), and 186–206 (LHTFVLPLLTAVFMLAHFLMI). Residues histidine 187 and histidine 202 each coordinate heme b.

This sequence belongs to the cytochrome b family. PetB subfamily. In terms of assembly, the 4 large subunits of the cytochrome b6-f complex are cytochrome b6, subunit IV (17 kDa polypeptide, PetD), cytochrome f and the Rieske protein, while the 4 small subunits are PetG, PetL, PetM and PetN. The complex functions as a dimer. Requires heme b as cofactor. Heme c serves as cofactor.

Its subcellular location is the plastid. It is found in the chloroplast thylakoid membrane. Functionally, component of the cytochrome b6-f complex, which mediates electron transfer between photosystem II (PSII) and photosystem I (PSI), cyclic electron flow around PSI, and state transitions. The polypeptide is Cytochrome b6 (Mesostigma viride (Green alga)).